The sequence spans 320 residues: MTEAIAVVESRAIAPVQDWDVLQMLLEDHRSPNTRRAYDRDLRLFFAWWLDEDPHPEAIAYWLSLPQSEAIAVVLRWKASMRDRGLAEATINRRLAALKSLVRFSRRLGRCTFSLEDVKGDRVQSYRDTTGTTPERFRELLALPNRQTAKGARDYAILRLLWENALRRSEAVQTRVQDLEQGDRRLWILGKGKGRQRLPVSLSVEMVQALQDWLRWHPKAEPEQPLFTALDRRSYGQQLSDQAVYLLVKRSAEAIKLGKRLSPHRIRHSAITAALDATGGNIRLVQKLSRHSRLETLQRYDDARQDFQGECTEHLAKLLG.

The Core-binding (CB) domain maps to 16 to 106 (VQDWDVLQML…ALKSLVRFSR (91 aa)). The Tyr recombinase domain maps to 127–313 (RDTTGTTPER…RQDFQGECTE (187 aa)). Active-site residues include Arg-167, Lys-193, His-264, Arg-267, and His-291. Tyr-300 (O-(3'-phospho-DNA)-tyrosine intermediate) is an active-site residue.

Belongs to the 'phage' integrase family.

It is found in the cytoplasm. Functionally, site-specific tyrosine recombinase, which acts by catalyzing the cutting and rejoining of the recombining DNA molecules. This chain is Tyrosine recombinase Synpcc7942_B2651, found in Synechococcus elongatus (strain ATCC 33912 / PCC 7942 / FACHB-805) (Anacystis nidulans R2).